A 444-amino-acid chain; its full sequence is tRNA-2-methylthio-N(6)-dimethylallyladenosine synthase (444 aa).

In terms of domain architecture, MTTase N-terminal spans 10 to 126; sequence SSFYIHTFGC…LAGLVAGLRE (117 aa). Cys19, Cys55, Cys89, Cys163, Cys167, and Cys170 together coordinate [4Fe-4S] cluster. The Radical SAM core domain maps to 149-379; it reads RAGSISAFLP…IELQNAISRE (231 aa). The TRAM domain maps to 382 to 444; sequence QREIGKTVEV…TSATLSGEAV (63 aa).

This sequence belongs to the methylthiotransferase family. MiaB subfamily. As to quaternary structure, monomer. [4Fe-4S] cluster is required as a cofactor.

It localises to the cytoplasm. It carries out the reaction N(6)-dimethylallyladenosine(37) in tRNA + (sulfur carrier)-SH + AH2 + 2 S-adenosyl-L-methionine = 2-methylsulfanyl-N(6)-dimethylallyladenosine(37) in tRNA + (sulfur carrier)-H + 5'-deoxyadenosine + L-methionine + A + S-adenosyl-L-homocysteine + 2 H(+). In terms of biological role, catalyzes the methylthiolation of N6-(dimethylallyl)adenosine (i(6)A), leading to the formation of 2-methylthio-N6-(dimethylallyl)adenosine (ms(2)i(6)A) at position 37 in tRNAs that read codons beginning with uridine. The sequence is that of tRNA-2-methylthio-N(6)-dimethylallyladenosine synthase from Chlorobaculum tepidum (strain ATCC 49652 / DSM 12025 / NBRC 103806 / TLS) (Chlorobium tepidum).